The chain runs to 133 residues: Beta-synuclein (133 aa).

A run of 2 repeats spans residues 20–30 (EKTKQGVTEAA) and 31–41 (EKTKEGVLYVG). The segment at 20-66 (EKTKQGVTEAAEKTKEGVLYVGSKTSGVVQGVASVAEKTKEQASHLG) is 4 X 11 AA tandem repeats of [EGS]-K-T-K-[EQ]-[GQ]-V-X(4). Residues 42–55 (SKTSGVVQGVASVA) form a 3; approximate repeat. At S45 the chain carries Phosphoserine. Residues 56–66 (EKTKEQASHLG) form repeat 4. The interval 96–133 (EVAQEAAEEPLIEPLMEPEGESYEDSPQEEYQEYEPEA) is disordered. Residues 97 to 133 (VAQEAAEEPLIEPLMEPEGESYEDSPQEEYQEYEPEA) show a composition bias toward acidic residues. The residue at position 117 (S117) is a Phosphoserine; by BARK1, CK2 and GRK5.

The protein belongs to the synuclein family. In terms of processing, phosphorylated. Phosphorylation by G-protein coupled receptor kinases (GRK) is more efficient than phosphorylation by CK1, CK2 and CaM-kinase II. In terms of tissue distribution, highly expressed in the brain.

The protein localises to the cytoplasm. In terms of biological role, may be involved in neuronal plasticity. The sequence is that of Beta-synuclein (Sncb) from Mus musculus (Mouse).